Reading from the N-terminus, the 31-residue chain is Protamine PTP4 (31 aa).

Residues 1–31 (MPRRRRASRRIRRRRRPRVSRRRRGGRRRRR) are disordered.

In terms of tissue distribution, testis.

Its subcellular location is the nucleus. It localises to the chromosome. In terms of biological role, protamines substitute for histones in the chromatin of sperm during the haploid phase of spermatogenesis. They compact sperm DNA into a highly condensed, stable and inactive complex. This Oncorhynchus mykiss (Rainbow trout) protein is Protamine PTP4.